The primary structure comprises 441 residues: Serine carboxypeptidase-like 2 (441 aa).

A signal peptide spans 1–29 (MANKYFSSVLKSLLLLLHLVFLSKQHVDS). 3 disulfide bridges follow: C88-C331, C252-C266, and C290-C297. N109 carries an N-linked (GlcNAc...) asparagine glycan. S184 is an active-site residue. The N-linked (GlcNAc...) asparagine glycan is linked to N350. D366 is a catalytic residue. N382 is a glycosylation site (N-linked (GlcNAc...) asparagine). Residue H419 is part of the active site.

The protein belongs to the peptidase S10 family. As to expression, expressed in seedlings and roots.

It is found in the secreted. Functionally, probable carboxypeptidase. The sequence is that of Serine carboxypeptidase-like 2 (SCPL2) from Arabidopsis thaliana (Mouse-ear cress).